Here is a 435-residue protein sequence, read N- to C-terminus: Light-independent protochlorophyllide reductase subunit N (435 aa).

C23, C48, and C108 together coordinate [4Fe-4S] cluster.

Belongs to the BchN/ChlN family. As to quaternary structure, protochlorophyllide reductase is composed of three subunits; ChlL, ChlN and ChlB. Forms a heterotetramer of two ChlB and two ChlN subunits. [4Fe-4S] cluster is required as a cofactor.

The protein localises to the plastid. It localises to the chloroplast. The enzyme catalyses chlorophyllide a + oxidized 2[4Fe-4S]-[ferredoxin] + 2 ADP + 2 phosphate = protochlorophyllide a + reduced 2[4Fe-4S]-[ferredoxin] + 2 ATP + 2 H2O. The protein operates within porphyrin-containing compound metabolism; chlorophyll biosynthesis (light-independent). Its function is as follows. Component of the dark-operative protochlorophyllide reductase (DPOR) that uses Mg-ATP and reduced ferredoxin to reduce ring D of protochlorophyllide (Pchlide) to form chlorophyllide a (Chlide). This reaction is light-independent. The NB-protein (ChlN-ChlB) is the catalytic component of the complex. This chain is Light-independent protochlorophyllide reductase subunit N, found in Auxenochlorella protothecoides (Green microalga).